We begin with the raw amino-acid sequence, 1082 residues long: CRISPR-associated endonuclease Cas9 (1082 aa).

Catalysis depends on aspartate 16, which acts as the For RuvC-like nuclease domain. Residues aspartate 16, glutamate 504, and glutamate 508 each contribute to the Mg(2+) site. An HNH Cas9-type domain is found at 512-667 (SFKDRKEIEK…DEDGFKERNL (156 aa)). Histidine 588 serves as the catalytic Proton acceptor for HNH nuclease domain. Histidine 723 is a binding site for Mg(2+).

This sequence belongs to the CRISPR-associated protein Cas9 family. Subtype II-C subfamily. Monomer. Binds crRNA and tracrRNA. Mg(2+) serves as cofactor.

CRISPR (clustered regularly interspaced short palindromic repeat) is an adaptive immune system that provides protection against mobile genetic elements (viruses, transposable elements and conjugative plasmids). CRISPR clusters contain spacers, sequences complementary to antecedent mobile elements, and target invading nucleic acids. CRISPR clusters are transcribed and processed into CRISPR RNA (crRNA). In type II CRISPR systems correct processing of pre-crRNA requires a trans-encoded small RNA (tracrRNA), endogenous ribonuclease 3 (rnc) and this protein. The tracrRNA serves as a guide for ribonuclease 3-aided processing of pre-crRNA. Subsequently Cas9/crRNA/tracrRNA endonucleolytically cleaves linear or circular dsDNA target complementary to the spacer; Cas9 is inactive in the absence of the 2 guide RNAs (gRNA). Cas9 recognizes the protospacer adjacent motif (PAM) in the CRISPR repeat sequences to help distinguish self versus nonself, as targets within the bacterial CRISPR locus do not have PAMs. PAM recognition is also required for catalytic activity. Cuts target DNA in Cas9:gRNAs mixing experiments with C.jejuni strain NCTC 11168 and P.multocoda strain Pm70. The polypeptide is CRISPR-associated endonuclease Cas9 (Neisseria meningitidis serogroup A / serotype 4A (strain DSM 15465 / Z2491)).